A 346-amino-acid chain; its full sequence is UDP-3-O-acylglucosamine N-acyltransferase (346 aa).

Histidine 253 (proton acceptor) is an active-site residue.

Belongs to the transferase hexapeptide repeat family. LpxD subfamily. Homotrimer.

The enzyme catalyses a UDP-3-O-[(3R)-3-hydroxyacyl]-alpha-D-glucosamine + a (3R)-hydroxyacyl-[ACP] = a UDP-2-N,3-O-bis[(3R)-3-hydroxyacyl]-alpha-D-glucosamine + holo-[ACP] + H(+). Its pathway is bacterial outer membrane biogenesis; LPS lipid A biosynthesis. In terms of biological role, catalyzes the N-acylation of UDP-3-O-acylglucosamine using 3-hydroxyacyl-ACP as the acyl donor. Is involved in the biosynthesis of lipid A, a phosphorylated glycolipid that anchors the lipopolysaccharide to the outer membrane of the cell. This is UDP-3-O-acylglucosamine N-acyltransferase from Rickettsia peacockii (strain Rustic).